Reading from the N-terminus, the 525-residue chain is 2-isopropylmalate synthase (525 aa).

Residues 5–267 (VIIFDTTLRD…HTGIHHQEIY (263 aa)) form the Pyruvate carboxyltransferase domain. Mn(2+)-binding residues include D14, H202, H204, and N238. The interval 392–525 (RLEYFSVQSS…NNSQDMQETV (134 aa)) is regulatory domain.

Belongs to the alpha-IPM synthase/homocitrate synthase family. LeuA type 1 subfamily. In terms of assembly, homodimer. Mn(2+) is required as a cofactor.

Its subcellular location is the cytoplasm. The catalysed reaction is 3-methyl-2-oxobutanoate + acetyl-CoA + H2O = (2S)-2-isopropylmalate + CoA + H(+). Its pathway is amino-acid biosynthesis; L-leucine biosynthesis; L-leucine from 3-methyl-2-oxobutanoate: step 1/4. Catalyzes the condensation of the acetyl group of acetyl-CoA with 3-methyl-2-oxobutanoate (2-ketoisovalerate) to form 3-carboxy-3-hydroxy-4-methylpentanoate (2-isopropylmalate). This Sodalis glossinidius (strain morsitans) protein is 2-isopropylmalate synthase.